The sequence spans 421 residues: Testin (421 aa).

The region spanning 92-199 (MILTNPVAAK…GDVKLPCEMD (108 aa)) is the PET domain. The interval 133-164 (EKQPVAGSEGAQYRKKQLAKQLPAHDQDPSKC) is disordered. The segment covering 155–164 (PAHDQDPSKC) has biased composition (basic and acidic residues). 3 LIM zinc-binding domains span residues 234–297 (YSCY…CDSE), 299–359 (PRCA…NHAV), and 362–421 (QGCH…KMMS).

Belongs to the prickle / espinas / testin family. In terms of assembly, interacts via LIM domain 1 with ZYX. Interacts (via LIM domain 3) with ENAH and VASP. Interacts with ALKBH4, talin, actin, alpha-actinin, GRIP1 and PXN. Interacts (via LIM domain 2) with ACTL7A (via N-terminus). Heterodimer with ACTL7A; the heterodimer interacts with ENAH to form a heterotrimer.

It localises to the cytoplasm. The protein resides in the cell junction. It is found in the focal adhesion. Functionally, scaffold protein that may play a role in cell adhesion, cell spreading and in the reorganization of the actin cytoskeleton. Plays a role in the regulation of cell proliferation. May act as a tumor suppressor. This chain is Testin (TES), found in Aotus nancymaae (Ma's night monkey).